The chain runs to 259 residues: 4-hydroxy-tetrahydrodipicolinate reductase (259 aa).

Residues 9-14 (GAGGRM) and Glu-35 contribute to the NAD(+) site. Arg-36 is an NADP(+) binding site. NAD(+) is bound by residues 92 to 94 (GTT) and 116 to 119 (APNM). Residue His-149 is the Proton donor/acceptor of the active site. His-150 provides a ligand contact to (S)-2,3,4,5-tetrahydrodipicolinate. Catalysis depends on Lys-153, which acts as the Proton donor. A (S)-2,3,4,5-tetrahydrodipicolinate-binding site is contributed by 159–160 (GT).

This sequence belongs to the DapB family.

The protein localises to the cytoplasm. It carries out the reaction (S)-2,3,4,5-tetrahydrodipicolinate + NAD(+) + H2O = (2S,4S)-4-hydroxy-2,3,4,5-tetrahydrodipicolinate + NADH + H(+). The enzyme catalyses (S)-2,3,4,5-tetrahydrodipicolinate + NADP(+) + H2O = (2S,4S)-4-hydroxy-2,3,4,5-tetrahydrodipicolinate + NADPH + H(+). It participates in amino-acid biosynthesis; L-lysine biosynthesis via DAP pathway; (S)-tetrahydrodipicolinate from L-aspartate: step 4/4. Functionally, catalyzes the conversion of 4-hydroxy-tetrahydrodipicolinate (HTPA) to tetrahydrodipicolinate. In Oleidesulfovibrio alaskensis (strain ATCC BAA-1058 / DSM 17464 / G20) (Desulfovibrio alaskensis), this protein is 4-hydroxy-tetrahydrodipicolinate reductase.